Reading from the N-terminus, the 85-residue chain is U4-theraphotoxin-Hhn1z (85 aa).

The first 22 residues, 1–22, serve as a signal peptide directing secretion; it reads MKMTLIAILTCAAVLVLHTTAA. A propeptide spanning residues 23 to 48 is cleaved from the precursor; the sequence is EELEAESQLMEVGMPDTELEAVDEER. 3 disulfides stabilise this stretch: Cys-52–Cys-66, Cys-56–Cys-77, and Cys-71–Cys-82.

This sequence belongs to the neurotoxin 12 (Hwtx-2) family. 02 (Hwtx-2) subfamily. In terms of tissue distribution, expressed by the venom gland.

The protein resides in the secreted. Postsynaptic neurotoxin. This chain is U4-theraphotoxin-Hhn1z, found in Cyriopagopus hainanus (Chinese bird spider).